Reading from the N-terminus, the 289-residue chain is Pantothenate synthetase (289 aa).

33–40 (MGNLHDGH) provides a ligand contact to ATP. Residue His40 is the Proton donor of the active site. Residue Gln64 participates in (R)-pantoate binding. Residue Gln64 participates in beta-alanine binding. An ATP-binding site is contributed by 155-158 (GKKD). Gln161 lines the (R)-pantoate pocket. Residues Ala184 and 192-195 (LSSR) each bind ATP.

The protein belongs to the pantothenate synthetase family. As to quaternary structure, homodimer.

Its subcellular location is the cytoplasm. It catalyses the reaction (R)-pantoate + beta-alanine + ATP = (R)-pantothenate + AMP + diphosphate + H(+). It functions in the pathway cofactor biosynthesis; (R)-pantothenate biosynthesis; (R)-pantothenate from (R)-pantoate and beta-alanine: step 1/1. Functionally, catalyzes the condensation of pantoate with beta-alanine in an ATP-dependent reaction via a pantoyl-adenylate intermediate. This chain is Pantothenate synthetase, found in Acidovorax sp. (strain JS42).